The following is a 294-amino-acid chain: 2-dehydro-3-deoxy-phosphogluconate/2-dehydro-3-deoxy-6-phosphogalactonate aldolase (294 aa).

Substrate contacts are provided by residues 43–44, 130–132, and 155–157; these read TT, YNY, and KDT. K155 acts as the Schiff-base intermediate with substrate in catalysis.

Belongs to the DapA family. KDPG aldolase subfamily. Homotetramer; dimer of dimers.

The enzyme catalyses 2-dehydro-3-deoxy-6-phospho-D-gluconate = D-glyceraldehyde 3-phosphate + pyruvate. It catalyses the reaction 2-dehydro-3-deoxy-6-phospho-D-galactonate = D-glyceraldehyde 3-phosphate + pyruvate. It functions in the pathway carbohydrate acid metabolism; 2-dehydro-3-deoxy-D-gluconate degradation; D-glyceraldehyde 3-phosphate and pyruvate from 2-dehydro-3-deoxy-D-gluconate: step 2/2. Functionally, involved in the degradation of glucose and galactose via the Entner-Doudoroff pathway. Catalyzes the reversible cleavage of 2-keto-3-deoxy-6-phosphogluconate (KDPG) and 2-keto-3-deoxygluconate (KDG) forming pyruvate and glyceraldehyde 3-phosphate or glyceraldehyde, respectively. It is also able to catalyze the reversible cleavage of 2-keto-3-deoxy-6-phosphogalactonate (KDPGal) and 2-keto-3-deoxygalactonate (KDGal). It is equally active with both D- and L-glyceraldehyde. This chain is 2-dehydro-3-deoxy-phosphogluconate/2-dehydro-3-deoxy-6-phosphogalactonate aldolase, found in Saccharolobus solfataricus (Sulfolobus solfataricus).